The primary structure comprises 283 residues: Thymidylate synthase (283 aa).

A dUMP-binding site is contributed by arginine 22. Cysteine 160 serves as the catalytic Nucleophile. DUMP is bound by residues 180–183 (RSCD), asparagine 191, and 221–223 (HIY). Aspartate 183 is a (6R)-5,10-methylene-5,6,7,8-tetrahydrofolate binding site. Serine 282 provides a ligand contact to (6R)-5,10-methylene-5,6,7,8-tetrahydrofolate.

This sequence belongs to the thymidylate synthase family. Bacterial-type ThyA subfamily. As to quaternary structure, homodimer.

It localises to the cytoplasm. It catalyses the reaction dUMP + (6R)-5,10-methylene-5,6,7,8-tetrahydrofolate = 7,8-dihydrofolate + dTMP. It participates in pyrimidine metabolism; dTTP biosynthesis. Its function is as follows. Catalyzes the reductive methylation of 2'-deoxyuridine-5'-monophosphate (dUMP) to 2'-deoxythymidine-5'-monophosphate (dTMP) while utilizing 5,10-methylenetetrahydrofolate (mTHF) as the methyl donor and reductant in the reaction, yielding dihydrofolate (DHF) as a by-product. This enzymatic reaction provides an intracellular de novo source of dTMP, an essential precursor for DNA biosynthesis. The chain is Thymidylate synthase from Mannheimia succiniciproducens (strain KCTC 0769BP / MBEL55E).